The sequence spans 241 residues: Pyridoxine 5'-phosphate synthase (241 aa).

Residue Asn-7 participates in 3-amino-2-oxopropyl phosphate binding. 9 to 10 lines the 1-deoxy-D-xylulose 5-phosphate pocket; sequence DH. Arg-18 lines the 3-amino-2-oxopropyl phosphate pocket. The active-site Proton acceptor is His-43. 1-deoxy-D-xylulose 5-phosphate is bound by residues Arg-45 and His-50. Glu-70 (proton acceptor) is an active-site residue. Thr-100 is a binding site for 1-deoxy-D-xylulose 5-phosphate. The active-site Proton donor is the His-191. 3-amino-2-oxopropyl phosphate is bound by residues Gly-192 and 213–214; that span reads GH.

It belongs to the PNP synthase family. In terms of assembly, homooctamer; tetramer of dimers.

The protein resides in the cytoplasm. The enzyme catalyses 3-amino-2-oxopropyl phosphate + 1-deoxy-D-xylulose 5-phosphate = pyridoxine 5'-phosphate + phosphate + 2 H2O + H(+). The protein operates within cofactor biosynthesis; pyridoxine 5'-phosphate biosynthesis; pyridoxine 5'-phosphate from D-erythrose 4-phosphate: step 5/5. Catalyzes the complicated ring closure reaction between the two acyclic compounds 1-deoxy-D-xylulose-5-phosphate (DXP) and 3-amino-2-oxopropyl phosphate (1-amino-acetone-3-phosphate or AAP) to form pyridoxine 5'-phosphate (PNP) and inorganic phosphate. This chain is Pyridoxine 5'-phosphate synthase, found in Nitrosospira multiformis (strain ATCC 25196 / NCIMB 11849 / C 71).